A 289-amino-acid polypeptide reads, in one-letter code: 4-hydroxybenzoate octaprenyltransferase (289 aa).

9 helical membrane passes run 19-39 (IPIL…SHGL), 42-62 (ISYL…GCII), 85-105 (GQLS…VAFI), 107-127 (VLFL…LAIL), 134-154 (FFAI…FMAF), 165-185 (AWIF…IYAL), 211-231 (ILLF…YCDF), 233-253 (SFFY…YFLY), and 265-285 (FSAN…QYII).

Belongs to the UbiA prenyltransferase family. Mg(2+) is required as a cofactor.

The protein resides in the cell inner membrane. It catalyses the reaction all-trans-octaprenyl diphosphate + 4-hydroxybenzoate = 4-hydroxy-3-(all-trans-octaprenyl)benzoate + diphosphate. It participates in cofactor biosynthesis; ubiquinone biosynthesis. Catalyzes the prenylation of para-hydroxybenzoate (PHB) with an all-trans polyprenyl group. Mediates the second step in the final reaction sequence of ubiquinone-8 (UQ-8) biosynthesis, which is the condensation of the polyisoprenoid side chain with PHB, generating the first membrane-bound Q intermediate 3-octaprenyl-4-hydroxybenzoate. The chain is 4-hydroxybenzoate octaprenyltransferase from Francisella tularensis subsp. holarctica (strain FTNF002-00 / FTA).